Here is a 117-residue protein sequence, read N- to C-terminus: G antigen 5 (117 aa).

Residues 1–117 (MSWRGRSTYY…PEEGEKQSQC (117 aa)) form a disordered region. Composition is skewed to acidic residues over residues 32 to 45 (FSDEVEPATPEEGE) and 87 to 96 (ECEDGPDGQE). Basic and acidic residues predominate over residues 103-117 (EEVKTPEEGEKQSQC).

It belongs to the GAGE family. In terms of tissue distribution, expressed in a variety of tumor tissues but not in normal tissues, except testis.

This is G antigen 5 (GAGE5) from Homo sapiens (Human).